A 314-amino-acid polypeptide reads, in one-letter code: Acetyl-coenzyme A carboxylase carboxyl transferase subunit alpha (314 aa).

A CoA carboxyltransferase C-terminal domain is found at 38–292 (RLERKSAALL…ANAIDEELDA (255 aa)).

It belongs to the AccA family. As to quaternary structure, acetyl-CoA carboxylase is a heterohexamer composed of biotin carboxyl carrier protein (AccB), biotin carboxylase (AccC) and two subunits each of ACCase subunit alpha (AccA) and ACCase subunit beta (AccD).

Its subcellular location is the cytoplasm. It catalyses the reaction N(6)-carboxybiotinyl-L-lysyl-[protein] + acetyl-CoA = N(6)-biotinyl-L-lysyl-[protein] + malonyl-CoA. It functions in the pathway lipid metabolism; malonyl-CoA biosynthesis; malonyl-CoA from acetyl-CoA: step 1/1. In terms of biological role, component of the acetyl coenzyme A carboxylase (ACC) complex. First, biotin carboxylase catalyzes the carboxylation of biotin on its carrier protein (BCCP) and then the CO(2) group is transferred by the carboxyltransferase to acetyl-CoA to form malonyl-CoA. The protein is Acetyl-coenzyme A carboxylase carboxyl transferase subunit alpha of Erythrobacter litoralis (strain HTCC2594).